The primary structure comprises 160 residues: 6,7-dimethyl-8-ribityllumazine synthase (160 aa).

Residues W28, 59–61 (SFE), and 82–84 (VII) each bind 5-amino-6-(D-ribitylamino)uracil. 87–88 (GT) serves as a coordination point for (2S)-2-hydroxy-3-oxobutyl phosphate. The active-site Proton donor is H90. Position 115 (F115) interacts with 5-amino-6-(D-ribitylamino)uracil. (2S)-2-hydroxy-3-oxobutyl phosphate is bound at residue R129.

The protein belongs to the DMRL synthase family.

The catalysed reaction is (2S)-2-hydroxy-3-oxobutyl phosphate + 5-amino-6-(D-ribitylamino)uracil = 6,7-dimethyl-8-(1-D-ribityl)lumazine + phosphate + 2 H2O + H(+). The protein operates within cofactor biosynthesis; riboflavin biosynthesis; riboflavin from 2-hydroxy-3-oxobutyl phosphate and 5-amino-6-(D-ribitylamino)uracil: step 1/2. Functionally, catalyzes the formation of 6,7-dimethyl-8-ribityllumazine by condensation of 5-amino-6-(D-ribitylamino)uracil with 3,4-dihydroxy-2-butanone 4-phosphate. This is the penultimate step in the biosynthesis of riboflavin. The protein is 6,7-dimethyl-8-ribityllumazine synthase of Clavibacter sepedonicus (Clavibacter michiganensis subsp. sepedonicus).